The primary structure comprises 775 residues: Coiled-coil domain-containing protein 33 (775 aa).

Disordered regions lie at residues 1 to 23 (MGRQKTKVPEEPQDRLDTSLDPY) and 68 to 87 (EANNHSPQARTSVTSEPTRA). The span at 7 to 18 (KVPEEPQDRLDT) shows a compositional bias: basic and acidic residues. The C2 domain maps to 12–141 (PQDRLDTSLD…RAFHPYHFEL (130 aa)). Residues 71 to 84 (NHSPQARTSVTSEP) show a composition bias toward polar residues. Coiled coils occupy residues 414–561 (VEMN…ERKE) and 672–715 (DKFS…LQEQ). The tract at residues 735 to 775 (RSQGSTTPRQNLKDEGYPGNIERPLQTHLTPGTRDIRHHLR) is disordered.

In Rattus norvegicus (Rat), this protein is Coiled-coil domain-containing protein 33 (Ccdc33).